The chain runs to 147 residues: MALKRIHKELNDLARDPPAQCSAGPVGDDMFHWQATIMGPNDSPYQGGVFFLTIHFPTDYPFKPPKVAFTTRIYHPNINSNGSICLDILRSQWSPALTISKVLLSICSLLCDPNPDDPLVPEIARIYKTDRDKYNRISREWTQKYAM.

The UBC core domain maps to 1–147 (MALKRIHKEL…SREWTQKYAM (147 aa)). The Glycyl thioester intermediate role is filled by C85.

Belongs to the ubiquitin-conjugating enzyme family. As to quaternary structure, interacts with SCF (SKP1-CUL1-F-box protein) E3 ubiquitin ligase complex. Interacts with CNOT4 (via RING domain). Interacts with E3 ubiquitin-protein ligases CBLC, PJA1 and PJA2. Interacts with PDZRN3. Interacts with PPP1R11. Interacts with E3 ubiquitin-protein ligase PHF7; the interaction inhibits cleavage of PHF7 and promotes association of the complex with the nucleosome core particle.

The catalysed reaction is S-ubiquitinyl-[E1 ubiquitin-activating enzyme]-L-cysteine + [E2 ubiquitin-conjugating enzyme]-L-cysteine = [E1 ubiquitin-activating enzyme]-L-cysteine + S-ubiquitinyl-[E2 ubiquitin-conjugating enzyme]-L-cysteine.. It carries out the reaction S-ubiquitinyl-[E1 ubiquitin-activating enzyme]-L-cysteine + [acceptor protein]-L-lysine = [E1 ubiquitin-activating enzyme]-L-cysteine + N(6)-monoubiquitinyl-[acceptor protein]-L-lysine.. It participates in protein modification; protein ubiquitination. In terms of biological role, accepts ubiquitin from the E1 complex and catalyzes its covalent attachment to other proteins. In vitro catalyzes 'Lys-48'-linked polyubiquitination. Mediates the selective degradation of short-lived and abnormal proteins. Functions in the E6/E6-AP-induced ubiquitination of p53/TP53. Mediates ubiquitination of PEX5 and SQSTM1 and autoubiquitination of STUB1 and TRAF6. Involved in the signal-induced conjugation and subsequent degradation of NFKBIA, FBXW2-mediated GCM1 ubiquitination and degradation, MDM2-dependent degradation of p53/TP53 and the activation of MAVS in the mitochondria by RIGI in response to viral infection. Essential for viral activation of IRF3. This Sus scrofa (Pig) protein is Ubiquitin-conjugating enzyme E2 D2 (UBE2D2).